A 197-amino-acid polypeptide reads, in one-letter code: Imidazoleglycerol-phosphate dehydratase (197 aa).

The protein belongs to the imidazoleglycerol-phosphate dehydratase family.

It is found in the cytoplasm. The catalysed reaction is D-erythro-1-(imidazol-4-yl)glycerol 3-phosphate = 3-(imidazol-4-yl)-2-oxopropyl phosphate + H2O. It functions in the pathway amino-acid biosynthesis; L-histidine biosynthesis; L-histidine from 5-phospho-alpha-D-ribose 1-diphosphate: step 6/9. The protein is Imidazoleglycerol-phosphate dehydratase of Rhodopseudomonas palustris (strain HaA2).